A 52-amino-acid polypeptide reads, in one-letter code: Insulin (52 aa).

Disulfide bonds link Cys-7–Cys-38, Cys-19–Cys-51, and Cys-37–Cys-42.

It belongs to the insulin family. As to quaternary structure, heterodimer of a B chain and an A chain linked by two disulfide bonds.

It is found in the secreted. Its function is as follows. Insulin decreases blood glucose concentration. It increases cell permeability to monosaccharides, amino acids and fatty acids. It accelerates glycolysis, the pentose phosphate cycle, and glycogen synthesis in liver. The chain is Insulin (ins) from Polypterus senegalus (Senegal bichir).